Reading from the N-terminus, the 72-residue chain is SRY-related protein ADW2 (72 aa).

Residues 1 to 69 (VKRPMNAFMV…KHMADYADYK (69 aa)) constitute a DNA-binding region (HMG box).

The protein resides in the nucleus. The chain is SRY-related protein ADW2 from Alligator mississippiensis (American alligator).